Consider the following 225-residue polypeptide: Uracil-DNA glycosylase (225 aa).

Catalysis depends on aspartate 68, which acts as the Proton acceptor.

Belongs to the uracil-DNA glycosylase (UDG) superfamily. UNG family.

It localises to the cytoplasm. The enzyme catalyses Hydrolyzes single-stranded DNA or mismatched double-stranded DNA and polynucleotides, releasing free uracil.. Functionally, excises uracil residues from the DNA which can arise as a result of misincorporation of dUMP residues by DNA polymerase or due to deamination of cytosine. This Mycolicibacterium gilvum (strain PYR-GCK) (Mycobacterium gilvum (strain PYR-GCK)) protein is Uracil-DNA glycosylase.